Consider the following 695-residue polypeptide: MNSYQIQNQPYQQIQNTHPSFQQVQPMQVPHLQQQQQHQTMIAQQQHTPPQQHTPPQMNMIQQHTQPMLSQPQISLQMQPPSPILASQQQQQHMQSSPILASSNLTNSNNASQTTLPIITSKLLLKKEPIDQEVVNSTHKTTTTNNKPPKQSKRKEKERLEEEKQTVAQQQQYQPPFIPLASNESNSDNPFKGSHAYGVSTTPYGNSQFNNNNNNNNNNNNNNNNSNNNSNNNNGNNNINNNNNNSNNNNNNNSNNNNNNSNNNNGNNNNNNNNNNNNNNNNHNTNNNNSNSNNNNNNGYQQDKKDDYSMMIWSEVGRKINILIRTTSKATKGTPISTQEIAEAIGASNGVTADLVELIKSINDPTYVRKLPPSSISNTPTMGSQSGGMVYNSSPMLSPSTMSPILQHGNYQMGGDMYFGGNNQFSGDKQSALNNVKNSKGGNTNNSGGGSSSGGTNDTQAKKPARRRKMRYGGTELSCHTCGVTNTPEWRRGPNGAKTLCNACGLAWAKSVKSEKQKELLANSTGVNITEPKKAQKRKKESSDNNNNNNNSSDSNKVLKSDDGSNNTNLTNDDDNGYPSSPNSSNSTSPSSHNINNNNNNNNNNNNNNNNNNNNNNNNNNNNIGNNNNNNINNNNTTNSITTPTTTPFPTTIPAMQIVSQLPVMVPQTQQQPHMSGNIISFQALHQNSGYQHYK.

Disordered regions lie at residues 82–111 (SPIL…SNNA), 134–304 (VVNS…QQDK), and 422–472 (NNQF…KMRY). 2 stretches are compositionally biased toward low complexity: residues 87–111 (SQQQ…SNNA) and 140–149 (KTTTTNNKPP). Positions 150–174 (KQSKRKEKERLEEEKQTVAQQQQYQ) form a coiled coil. Residues 155–165 (KEKERLEEEKQ) show a composition bias toward basic and acidic residues. The segment covering 199–209 (VSTTPYGNSQF) has biased composition (polar residues). The span at 210-298 (NNNNNNNNNN…NSNSNNNNNN (89 aa)) shows a compositional bias: low complexity. The span at 422 to 433 (NNQFSGDKQSAL) shows a compositional bias: polar residues. Over residues 434 to 446 (NNVKNSKGGNTNN) the composition is skewed to low complexity. Residues 479–504 (CHTCGVTNTPEWRRGPNGAKTLCNAC) form a GATA-type zinc finger. The segment at 523–646 (NSTGVNITEP…TTNSITTPTT (124 aa)) is disordered. 2 stretches are compositionally biased toward low complexity: residues 544–556 (DNNN…SDSN) and 564–646 (GSNN…TPTT).

The chain is GATA zinc finger domain-containing protein 16 (gtaP) from Dictyostelium discoideum (Social amoeba).